We begin with the raw amino-acid sequence, 359 residues long: 4-hydroxy-3-methylbut-2-en-1-yl diphosphate synthase (flavodoxin) (359 aa).

Positions 264, 267, 299, and 306 each coordinate [4Fe-4S] cluster.

This sequence belongs to the IspG family. [4Fe-4S] cluster is required as a cofactor.

The enzyme catalyses (2E)-4-hydroxy-3-methylbut-2-enyl diphosphate + oxidized [flavodoxin] + H2O + 2 H(+) = 2-C-methyl-D-erythritol 2,4-cyclic diphosphate + reduced [flavodoxin]. It functions in the pathway isoprenoid biosynthesis; isopentenyl diphosphate biosynthesis via DXP pathway; isopentenyl diphosphate from 1-deoxy-D-xylulose 5-phosphate: step 5/6. In terms of biological role, converts 2C-methyl-D-erythritol 2,4-cyclodiphosphate (ME-2,4cPP) into 1-hydroxy-2-methyl-2-(E)-butenyl 4-diphosphate. This Mycoplasmoides gallisepticum (strain R(low / passage 15 / clone 2)) (Mycoplasma gallisepticum) protein is 4-hydroxy-3-methylbut-2-en-1-yl diphosphate synthase (flavodoxin).